The primary structure comprises 466 residues: 3-isopropylmalate dehydratase large subunit (466 aa).

Positions 347, 407, and 410 each coordinate [4Fe-4S] cluster.

The protein belongs to the aconitase/IPM isomerase family. LeuC type 1 subfamily. Heterodimer of LeuC and LeuD. Requires [4Fe-4S] cluster as cofactor.

It catalyses the reaction (2R,3S)-3-isopropylmalate = (2S)-2-isopropylmalate. The protein operates within amino-acid biosynthesis; L-leucine biosynthesis; L-leucine from 3-methyl-2-oxobutanoate: step 2/4. In terms of biological role, catalyzes the isomerization between 2-isopropylmalate and 3-isopropylmalate, via the formation of 2-isopropylmaleate. In Enterobacter sp. (strain 638), this protein is 3-isopropylmalate dehydratase large subunit.